The chain runs to 261 residues: Phosphonates import ATP-binding protein PhnC (261 aa).

One can recognise an ABC transporter domain in the interval 9 to 253 (IQLKDVSKIY…VFDDIYNGGN (245 aa)). 42 to 49 (GLSGAGKS) provides a ligand contact to ATP.

The protein belongs to the ABC transporter superfamily. Phosphonates importer (TC 3.A.1.9.1) family. As to quaternary structure, the complex is composed of two ATP-binding proteins (PhnC), two transmembrane proteins (PhnE) and a solute-binding protein (PhnD).

Its subcellular location is the cell membrane. The enzyme catalyses phosphonate(out) + ATP + H2O = phosphonate(in) + ADP + phosphate + H(+). In terms of biological role, part of the ABC transporter complex PhnCDE involved in phosphonates import. Responsible for energy coupling to the transport system. The sequence is that of Phosphonates import ATP-binding protein PhnC from Lactobacillus gasseri (strain ATCC 33323 / DSM 20243 / BCRC 14619 / CIP 102991 / JCM 1131 / KCTC 3163 / NCIMB 11718 / NCTC 13722 / AM63).